The sequence spans 160 residues: Non-secretory ribonuclease (160 aa).

The first 27 residues, 1–27, serve as a signal peptide directing secretion; that stretch reads MVPKLFTSQICLLLLLGLMGVEGSLHA. The C-linked (Man) tryptophan glycan is linked to Trp-34. His-42 acts as the Proton acceptor in catalysis. Asn-44 is a glycosylation site (N-linked (GlcNAc...) asparagine). Intrachain disulfides connect Cys-50–Cys-110, Cys-64–Cys-122, Cys-82–Cys-137, and Cys-89–Cys-98. Residue Tyr-60 is modified to 3'-nitrotyrosine. A substrate-binding site is contributed by 65-69; that stretch reads KNQNT. Asn-92, Asn-111, and Asn-138 each carry an N-linked (GlcNAc...) asparagine glycan. The active-site Proton donor is His-155.

It belongs to the pancreatic ribonuclease family. Interacts with and forms a tight 1:1 complex with RNH1. Dimerization of two such complexes may occur.

The protein localises to the lysosome. It is found in the cytoplasmic granule. It carries out the reaction an [RNA] containing cytidine + H2O = an [RNA]-3'-cytidine-3'-phosphate + a 5'-hydroxy-ribonucleotide-3'-[RNA].. The catalysed reaction is an [RNA] containing uridine + H2O = an [RNA]-3'-uridine-3'-phosphate + a 5'-hydroxy-ribonucleotide-3'-[RNA].. This is a non-secretory ribonuclease. It is a pyrimidine specific nuclease with a slight preference for U. Cytotoxin and helminthotoxin. Possesses a wide variety of biological activities. This Macaca fascicularis (Crab-eating macaque) protein is Non-secretory ribonuclease (RNASE2).